A 304-amino-acid polypeptide reads, in one-letter code: Syntaxin-132 (304 aa).

N-acetylmethionine is present on Met-1. The interval 1 to 30 is disordered; the sequence is MNDLLKGSFELPRGQSSREGDVELGEQQGG. Residues 1 to 275 are Cytoplasmic-facing; sequence MNDLLKGSFE…AKSLQKNSRK (275 aa). Coiled coils occupy residues 34–67 and 129–162; these read LEDF…ESKS and TLSL…DRRV. Residues 204-266 enclose the t-SNARE coiled-coil homology domain; sequence LAEIQERHDA…QSGNTALQRA (63 aa). A helical; Anchor for type IV membrane protein transmembrane segment spans residues 276 to 296; sequence WMCIAIIILLIVVAVIVVGVL. Topologically, residues 297–304 are vesicular; the sequence is KPWKNKSA.

Belongs to the syntaxin family. As to quaternary structure, part of the t-SNARE complex. Widely expressed in all tissues throughout plant development.

It localises to the cell membrane. Functionally, vesicle trafficking protein that functions in the secretory pathway. Acts in coordination with SYP123 to mediate tip-focused membrane trafficking for root hair tip growth. Functions in root hair elongation by forming SNARE complexes with VAMP721,VAMP722 or VAMP724. Involved in cytokinesis. Acts as a cell plate-specific syntaxin, required for the fusion of vesicles at the plane of cell division. Required for secretory trafficking to the plasma membrane during interphase. Involved in the regulation of density of the H(+) ATPase proteins at the plasma membrane of root and shoot in epidermal cells. Modulation of SYP132 expression by auxin affects clathrin-sensitive H(+) ATPase traffic from the plasma membrane, and influences apoplastic acidification and plant growth. The chain is Syntaxin-132 from Arabidopsis thaliana (Mouse-ear cress).